A 252-amino-acid polypeptide reads, in one-letter code: Ribonuclease HII (252 aa).

An RNase H type-2 domain is found at 41–232; the sequence is LLVAGVDEAG…VRLALEGREQ (192 aa). A divalent metal cation-binding residues include aspartate 47, glutamate 48, and aspartate 140.

Belongs to the RNase HII family. Mn(2+) serves as cofactor. The cofactor is Mg(2+).

It is found in the cytoplasm. The enzyme catalyses Endonucleolytic cleavage to 5'-phosphomonoester.. Its function is as follows. Endonuclease that specifically degrades the RNA of RNA-DNA hybrids. The sequence is that of Ribonuclease HII from Xanthomonas oryzae pv. oryzae (strain KACC10331 / KXO85).